A 468-amino-acid polypeptide reads, in one-letter code: MSKQQIGVVGMAVMGRNLALNIESRGYTVSVFNRSREKTEEVIAENPGKKLVPYYTVKEFVESLETPRRILLMVKAGAGTDAAIDSLKPYLEKGDIIIDGGNTFFQDTIRRNRELSAEGFNFIGTGVSGGEEGALKGPSIMPGGQKDAYELVAPILTKIAAVAEDGEPCVTYIGADGAGHYVKMVHNGIEYGDMQLIAEAYSLLKGGLNLSNEELANTFTEWNNGELSSYLIDITKDIFTKKDEDGNYLVDVILDEAANKGTGKWTSQSALDLGEPLSLITESVFARYISSLKAQRVAASKVLSGPKAQPAGDKAEFIEKVRRALYLGKIVSYAQGFSQLRAASDEYHWDLNYGEIAKIFRAGCIIRAQFLQKITDAYAENADIANLLLAPYFKKIADEYQQALRDVVAYAVQNGIPVPTFSAAVAYYDSYRAAVLPANLIQAQRDYFGAHTYKRTDKEGIFHTEWLE.

Residues 10-15 (GMAVMG), 33-35 (NRS), 74-76 (VKA), and Asn102 each bind NADP(+). Substrate contacts are provided by residues Asn102 and 128–130 (SGG). The Proton acceptor role is filled by Lys183. 186 to 187 (HN) lines the substrate pocket. Glu190 functions as the Proton donor in the catalytic mechanism. Residues Tyr191, Lys260, Arg287, Arg445, and His451 each coordinate substrate.

It belongs to the 6-phosphogluconate dehydrogenase family. As to quaternary structure, homodimer.

The enzyme catalyses 6-phospho-D-gluconate + NADP(+) = D-ribulose 5-phosphate + CO2 + NADPH. It functions in the pathway carbohydrate degradation; pentose phosphate pathway; D-ribulose 5-phosphate from D-glucose 6-phosphate (oxidative stage): step 3/3. In terms of biological role, catalyzes the oxidative decarboxylation of 6-phosphogluconate to ribulose 5-phosphate and CO(2), with concomitant reduction of NADP to NADPH. The chain is 6-phosphogluconate dehydrogenase, decarboxylating (gnd) from Salmonella typhimurium (strain LT2 / SGSC1412 / ATCC 700720).